Consider the following 148-residue polypeptide: MVDWTDAERAAITSLWGKIDVGEIGPQALTRLLIVYPWTQRHFTTFGNVSTNAAILGNPKVAQHGKTVMGGLENAVKNLDDIKNTYAKLSRMHSEKLHVDPDNFRALAECISVCVAAKFGKQAFTADVQEAWQKFLSAVVSALGRQYH.

A Globin domain is found at 3–148 (DWTDAERAAI…VVSALGRQYH (146 aa)). The heme b site is built by His64 and His93.

The protein belongs to the globin family. As to quaternary structure, heterotetramer of two alpha chains and two beta chains. As to expression, red blood cells.

Involved in oxygen transport from gills to the various peripheral tissues. In Seriola quinqueradiata (Five-ray yellowtail), this protein is Hemoglobin subunit beta-B (hbb2).